Here is a 39-residue protein sequence, read N- to C-terminus: STQMLSPPERPREFRHPNELRQYLKELNEYYAIMGRTRF.

Phe-39 is subject to Phenylalanine amide.

The protein belongs to the NPY family. Neuronal somata and fibers.

The protein resides in the secreted. Functionally, may have an important physiological role in neuroregulation. The protein is Neuropeptide F of Cornu aspersum (Brown garden snail).